A 532-amino-acid polypeptide reads, in one-letter code: MAEAPIAPVVLVILDGWGYRPDTRANAIAQANTPIMDSLIAAYPNTLVNTSGKDVGLPKGQMGNSEVGHLNLGAGRVVPQELVRISDAIEDGTFFDNQALIEVCQRVRDRRGKLHLIGLCSDGGVHSHIDHLLGLIDLAKLQGISQLCIHAITDGRDTPTNEGAHFVQQIQAHLEKIGLGRIVSVSGRYYALDRDRRWDRVEKAYRVMTEDGVGDGRSAAQVIKDYYASDITDEFIPPTRIGAGAIASGDGVIFYNFRPDRARQLCYALVNPSFDGFPRERIQPLDFVTFTQYDPALPVVVAFEPQNLNNILGEIISRQGMKQFRTAETEKYPHVTYFFNGGLEQPFAGEDRELIQSPMVSTYDKAPQMSAKAVTDAVCRAMEKGIYSLVVVNYANPDMVGHTGKLKEAIQAIETVDLNLGRLLASAAKVGGTVLITADHGNAEYMSDESGNPWTAHTTNPVPFILVEGEGRKIPGHGGEVKLREGGKLADIAPTILDILQLPVPAEMTGKTLIDQPLVEIKANRTPVNLSR.

Residues aspartate 15 and serine 65 each contribute to the Mn(2+) site. Serine 65 serves as the catalytic Phosphoserine intermediate. Substrate contacts are provided by residues histidine 126, 156 to 157, arginine 188, arginine 194, 258 to 261, and lysine 331; these read RD and RPDR. Positions 398, 402, 439, 440, and 457 each coordinate Mn(2+).

It belongs to the BPG-independent phosphoglycerate mutase family. In terms of assembly, monomer. Mn(2+) serves as cofactor.

It catalyses the reaction (2R)-2-phosphoglycerate = (2R)-3-phosphoglycerate. It participates in carbohydrate degradation; glycolysis; pyruvate from D-glyceraldehyde 3-phosphate: step 3/5. Catalyzes the interconversion of 2-phosphoglycerate and 3-phosphoglycerate. The chain is 2,3-bisphosphoglycerate-independent phosphoglycerate mutase from Synechocystis sp. (strain ATCC 27184 / PCC 6803 / Kazusa).